The chain runs to 329 residues: Isoaspartyl peptidase/L-asparaginase (329 aa).

The active-site Nucleophile is the Thr-173. Substrate contacts are provided by residues 201–204 and 222–225; these read RVSD and TGVG.

This sequence belongs to the Ntn-hydrolase family. In terms of assembly, heterotetramer of two alpha and two beta chains arranged as a dimer of alpha/beta heterodimers. Post-translationally, cleaved into an alpha and beta chain by autocatalysis; this activates the enzyme. The N-terminal residue of the beta subunit is responsible for the nucleophile hydrolase activity.

The enzyme catalyses Cleavage of a beta-linked Asp residue from the N-terminus of a polypeptide.. In terms of biological role, degrades proteins damaged by L-isoaspartyl residue formation (also known as beta-Asp residues). Probably performs the final step in the degradation of the reserve polymer cyanophycin (depolymerizes the building block L-beta-Asp-Arg). Also has L-asparaginase activity. In Synechocystis sp. (strain ATCC 27184 / PCC 6803 / Kazusa), this protein is Isoaspartyl peptidase/L-asparaginase.